Here is a 113-residue protein sequence, read N- to C-terminus: Large ribosomal subunit protein bL19 (113 aa).

It belongs to the bacterial ribosomal protein bL19 family.

Its function is as follows. This protein is located at the 30S-50S ribosomal subunit interface and may play a role in the structure and function of the aminoacyl-tRNA binding site. The polypeptide is Large ribosomal subunit protein bL19 (Desulfitobacterium hafniense (strain DSM 10664 / DCB-2)).